Consider the following 833-residue polypeptide: Transmembrane protease serine 7 (833 aa).

Over 1–62 (MDKEKSDPSC…RAPFWNVQNK (62 aa)) the chain is Cytoplasmic. Residues 30–49 (KLPGRRLPRKPIGKARPRKQ) form a disordered region. Residues 32-49 (PGRRLPRKPIGKARPRKQ) show a composition bias toward basic residues. A helical; Signal-anchor for type II membrane protein membrane pass occupies residues 63-83 (IILFTVFLFILAVTAWTLLWL). Residues 84-829 (YISKTDSKDA…NFVPWIHKYV (746 aa)) are Extracellular-facing. The region spanning 92 to 220 (DAFYFVGMFR…DSVVLNAGLR (129 aa)) is the SEA domain. N-linked (GlcNAc...) asparagine glycosylation is present at Asn-196. 3 disulfides stabilise this stretch: Cys-233/Cys-259, Cys-285/Cys-312, and Cys-355/Cys-386. CUB domains follow at residues 233–350 (CSQY…FEVI) and 355–471 (CENT…YNIS). Asn-405 and Asn-469 each carry an N-linked (GlcNAc...) asparagine glycan. 2 LDL-receptor class A domains span residues 473 to 509 (PCPA…LFCV) and 548 to 585 (PCTN…EGCG). 7 disulfides stabilise this stretch: Cys-474/Cys-486, Cys-481/Cys-499, Cys-493/Cys-508, Cys-549/Cys-561, Cys-556/Cys-575, Cys-569/Cys-584, and Cys-621/Cys-637. The Peptidase S1 domain maps to 596–830 (VVGGSDSQEG…FVPWIHKYVP (235 aa)). Active-site charge relay system residues include His-636 and Asp-684. Intrachain disulfides connect Cys-720–Cys-786, Cys-752–Cys-765, and Cys-776–Cys-806. Ser-780 serves as the catalytic Charge relay system.

It belongs to the peptidase S1 family. In terms of assembly, forms a heterodimer with SERPINA5. In terms of processing, N-glycosylated.

Its subcellular location is the cell membrane. Its function is as follows. Serine protease which preferentially hydrolyzes peptides with Arg at the P1 position. The protein is Transmembrane protease serine 7 of Rattus norvegicus (Rat).